The sequence spans 126 residues: Large ribosomal subunit protein bL17 (126 aa).

The protein belongs to the bacterial ribosomal protein bL17 family. In terms of assembly, part of the 50S ribosomal subunit. Contacts protein L32.

The polypeptide is Large ribosomal subunit protein bL17 (Vibrio atlanticus (strain LGP32) (Vibrio splendidus (strain Mel32))).